The chain runs to 157 residues: 6,7-dimethyl-8-ribityllumazine synthase 1 (157 aa).

Residues phenylalanine 22, alanine 53–glutamate 55, and threonine 82–isoleucine 84 each bind 5-amino-6-(D-ribitylamino)uracil. Glutamate 87–threonine 88 is a binding site for (2S)-2-hydroxy-3-oxobutyl phosphate. The active-site Proton donor is the histidine 90. Position 115 (asparagine 115) interacts with 5-amino-6-(D-ribitylamino)uracil. Residue histidine 129 participates in (2S)-2-hydroxy-3-oxobutyl phosphate binding.

This sequence belongs to the DMRL synthase family. Homopentamer.

It catalyses the reaction (2S)-2-hydroxy-3-oxobutyl phosphate + 5-amino-6-(D-ribitylamino)uracil = 6,7-dimethyl-8-(1-D-ribityl)lumazine + phosphate + 2 H2O + H(+). It participates in cofactor biosynthesis; riboflavin biosynthesis; riboflavin from 2-hydroxy-3-oxobutyl phosphate and 5-amino-6-(D-ribitylamino)uracil: step 1/2. Its function is as follows. Catalyzes the formation of 6,7-dimethyl-8-ribityllumazine by condensation of 5-amino-6-(D-ribitylamino)uracil with 3,4-dihydroxy-2-butanone 4-phosphate. This is the penultimate step in the biosynthesis of riboflavin. The chain is 6,7-dimethyl-8-ribityllumazine synthase 1 (ribH1) from Brucella abortus (strain 2308).